The sequence spans 115 residues: MKIVAFTLVAFVALAGASCPYAAPAAAPAPAAPSGYPAPPCPTNYLFSCQPNLAPAPCAQEAPAYGSAGAYTEQVPQYVGNPSREQVQQFHQRIGMAALMEELRGLGQGIQGQQY.

The first 17 residues, 1-17 (MKIVAFTLVAFVALAGA), serve as a signal peptide directing secretion. One can recognise a VM domain in the interval 35–72 (GYPAPPCPTNYLFSCQPNLAPAPCAQEAPAYGSAGAYT).

This sequence belongs to the vitelline membrane family.

The protein resides in the secreted. In terms of biological role, major early eggshell protein. In Drosophila yakuba (Fruit fly), this protein is Vitelline membrane protein Vm32E.